A 540-amino-acid polypeptide reads, in one-letter code: DNA topoisomerase 1 (540 aa).

Residues 1-110 (MELFIVESPT…NIKRAVFYEI (110 aa)) enclose the Toprim domain. Residues Glu-7 and Asp-79 each coordinate Mg(2+). Positions 126–536 (NMNLVYAQFA…FMEKIFGKEL (411 aa)) constitute a Topo IA-type catalytic domain. The segment at 161–166 (SAGRVQ) is interaction with DNA. The O-(5'-phospho-DNA)-tyrosine intermediate role is filled by Tyr-281.

It belongs to the type IA topoisomerase family. As to quaternary structure, monomer. The cofactor is Mg(2+).

It carries out the reaction ATP-independent breakage of single-stranded DNA, followed by passage and rejoining.. Releases the supercoiling and torsional tension of DNA, which is introduced during the DNA replication and transcription, by transiently cleaving and rejoining one strand of the DNA duplex. Introduces a single-strand break via transesterification at a target site in duplex DNA. The scissile phosphodiester is attacked by the catalytic tyrosine of the enzyme, resulting in the formation of a DNA-(5'-phosphotyrosyl)-enzyme intermediate and the expulsion of a 3'-OH DNA strand. The free DNA strand then undergoes passage around the unbroken strand, thus removing DNA supercoils. Finally, in the religation step, the DNA 3'-OH attacks the covalent intermediate to expel the active-site tyrosine and restore the DNA phosphodiester backbone. This Aquifex aeolicus (strain VF5) protein is DNA topoisomerase 1.